A 548-amino-acid chain; its full sequence is Pentatricopeptide repeat-containing protein At1g62680, mitochondrial (548 aa).

The N-terminal 43 residues, 1–43 (MQRSIAMTAKRFLHRNLLENGKPRTASSPSFSHCSSCRCWVRA), are a transit peptide targeting the mitochondrion. 12 PPR repeats span residues 84-118 (SIVDFNRLLSAIVKLKKYDVVISLGKKMEVLGIRN), 119-153 (DLYTFNIVINCFCCCFQVSLALSILGKMLKLGYEP), 154-188 (DRVTIGSLVNGFCRRNRVSDAVSLVDKMVEIGYKP), 189-223 (DIVAYNAIIDSLCKTKRVNDAFDFFKEIERKGIRP), 224-258 (NVVTYTALVNGLCNSSRWSDAARLLSDMIKKKITP), 259-293 (NVITYSALLDAFVKNGKVLEAKELFEEMVRMSIDP), 294-328 (DIVTYSSLINGLCLHDRIDEANQMFDLMVSKGCLA), 329-363 (DVVSYNTLINGFCKAKRVEDGMKLFREMSQRGLVS), 364-398 (NTVTYNTLIQGFFQAGDVDKAQEFFSQMDFFGISP), 399-433 (DIWTYNILLGGLCDNGELEKALVIFEDMQKREMDL), 434-468 (DIVTYTTVIRGMCKTGKVEEAWSLFCSLSLKGLKP), and 469-503 (DIVTYTTMMSGLCTKGLLHEVEALYTKMKQEGLMK).

This sequence belongs to the PPR family. P subfamily.

Its subcellular location is the mitochondrion. This is Pentatricopeptide repeat-containing protein At1g62680, mitochondrial from Arabidopsis thaliana (Mouse-ear cress).